A 435-amino-acid polypeptide reads, in one-letter code: Palmitoyltransferase pfa4 (435 aa).

The Cytoplasmic portion of the chain corresponds to 1-10; that stretch reads MLCSSFSVSR. A helical transmembrane segment spans residues 11-31; that stretch reads LAIPAVCILIAFLAYTSQIFF. Residues 32–48 are Lumenal-facing; the sequence is LYFEDAPLKEDEVWRIN. A helical transmembrane segment spans residues 49-69; sequence ILAICIWICYYRACTVDPGHV. The Cytoplasmic segment spans residues 70-129; the sequence is PKGWMPSDRERLKADRASGRQRWCRRCEAYKPPRAHHCKTCERCVPKMDHHCPWTSNCVS. The region spanning 91 to 141 is the DHHC domain; sequence RWCRRCEAYKPPRAHHCKTCERCVPKMDHHCPWTSNCVSHFTFPHFARFLF. The S-palmitoyl cysteine intermediate role is filled by cysteine 121. The helical transmembrane segment at 130–150 threads the bilayer; the sequence is HFTFPHFARFLFYAVVGIAYL. The Lumenal portion of the chain corresponds to 151-179; the sequence is ETRLWQRVSKVWGSRHLPSYLGPSMGQIG. Residues 180-200 traverse the membrane as a helical segment; the sequence is HLFVLFVTNSLTLFALSLLLL. At 201–435 the chain is on the cytoplasmic side; that stretch reads RTLWSLGSNT…QRAKRQHLSQ (235 aa). Basic and acidic residues predominate over residues 359–368; sequence RKPFHVRLEE. Positions 359 to 408 are disordered; that stretch reads RKPFHVRLEEYSNGSSDAEADTGSDDDSDHGEEGWKNSEGERLRDFGVDE. Over residues 376-388 the composition is skewed to acidic residues; the sequence is AEADTGSDDDSDH. Over residues 389–405 the composition is skewed to basic and acidic residues; that stretch reads GEEGWKNSEGERLRDFG.

Belongs to the DHHC palmitoyltransferase family. PFA4 subfamily.

The protein resides in the endoplasmic reticulum membrane. The catalysed reaction is L-cysteinyl-[protein] + hexadecanoyl-CoA = S-hexadecanoyl-L-cysteinyl-[protein] + CoA. In terms of biological role, mediates the reversible addition of palmitate to target proteins, thereby regulating their membrane association and biological function. The protein is Palmitoyltransferase pfa4 of Emericella nidulans (strain FGSC A4 / ATCC 38163 / CBS 112.46 / NRRL 194 / M139) (Aspergillus nidulans).